A 164-amino-acid chain; its full sequence is HTH-type transcriptional regulator PapX (164 aa).

The region spanning 25–159 (EHLLMQLCIR…FEVISKKLLA (135 aa)) is the HTH marR-type domain.

The protein resides in the cytoplasm. The polypeptide is HTH-type transcriptional regulator PapX (papX) (Escherichia coli).